We begin with the raw amino-acid sequence, 440 residues long: Transposon Ty1-GR1 Gag polyprotein (440 aa).

The span at 1–16 (MESQQLSQHSHISHGS) shows a compositional bias: low complexity. Disordered regions lie at residues 1–93 (MESQ…MMTQ), 126–173 (PQSQ…RPPP), and 352–440 (GSRN…PGTY). Polar residues-rich tracts occupy residues 48–60 (TKANSQQTTTPAS), 71–93 (SPQTAQSHSPQNGPYPQQCMMTQ), and 127–152 (QSQFPQYPSSVGTPLSTPSPESGNTF). The segment covering 153-165 (TDSSSADSDMTST) has biased composition (low complexity). Positions 299–401 (NNGIHINNKV…NSKSKTARAH (103 aa)) are RNA-binding. Low complexity predominate over residues 402–418 (NVSTSNNSPSTDNDSIS). Serine 416 carries the post-translational modification Phosphoserine. The span at 419–428 (KSTTEPIQLN) shows a compositional bias: polar residues. The span at 429-440 (NKHDLHLRPGTY) shows a compositional bias: basic and acidic residues.

Homotrimer.

The protein resides in the cytoplasm. In terms of biological role, capsid protein (CA) is the structural component of the virus-like particle (VLP), forming the shell that encapsulates the retrotransposons dimeric RNA genome. The particles are assembled from trimer-clustered units and there are holes in the capsid shells that allow for the diffusion of macromolecules. CA also has nucleocapsid-like chaperone activity, promoting primer tRNA(i)-Met annealing to the multipartite primer-binding site (PBS), dimerization of Ty1 RNA and initiation of reverse transcription. The protein is Transposon Ty1-GR1 Gag polyprotein (TY1A-GR1) of Saccharomyces cerevisiae (strain ATCC 204508 / S288c) (Baker's yeast).